Reading from the N-terminus, the 153-residue chain is Natriuretic peptides A (153 aa).

The signal sequence occupies residues 1–25; the sequence is MGPFSTITVSFLFCLAFWHPDQIGA. Propeptides lie at residues 26-123 and 93-103; these read NPVY…TAPR and DGEALGRSTWE. Residues 54–101 form a disordered region; it reads EDEAVPPQALSEQSDEAGAALSPLPEVPPWTGEVSPAQRDGEALGRST. Ser129 carries the phosphoserine modification. Residues Cys130 and Cys146 are joined by a disulfide bond. Residues 147 to 151 are important for degradation of atrial natriuretic peptide by IDE; sequence NSFRY.

It belongs to the natriuretic peptide family. In terms of assembly, homodimer; disulfide-linked antiparallel dimer. Post-translationally, the precursor molecule is proteolytically cleaved by CORIN at Arg-123 to produce the atrial natriuretic peptide. Undergoes further proteolytic cleavage by unknown proteases to give rise to long-acting natriuretic peptide, vessel dilator and kaliuretic peptide. Additional processing gives rise to the auriculin and atriopeptin peptides. In the kidneys, alternative processing by an unknown protease results in the peptide urodilatin. In terms of processing, cleavage by MME initiates degradation of the factor and thereby regulates its activity. Degradation by IDE results in reduced activation of NPR1 (in vitro). During IDE degradation, the resulting products can temporarily stimulate NPR2 to produce cGMP, before the fragments are completely degraded and inactivated by IDE (in vitro). Degraded by IDE. Post-translationally, phosphorylation on Ser-129 decreases vasorelaxant activity.

The protein localises to the secreted. The protein resides in the perikaryon. It localises to the cell projection. In terms of biological role, hormone that plays a key role in mediating cardio-renal homeostasis, and is involved in vascular remodeling and regulating energy metabolism. Acts by specifically binding and stimulating NPR1 to produce cGMP, which in turn activates effector proteins, such as PRKG1, that drive various biological responses. Regulates vasodilation, natriuresis, diuresis and aldosterone synthesis and is therefore essential for regulating blood pressure, controlling the extracellular fluid volume and maintaining the fluid-electrolyte balance. Also involved in inhibiting cardiac remodeling and cardiac hypertrophy by inducing cardiomyocyte apoptosis and attenuating the growth of cardiomyocytes and fibroblasts. Plays a role in female pregnancy by promoting trophoblast invasion and spiral artery remodeling in uterus, and thus prevents pregnancy-induced hypertension. In adipose tissue, acts in various cGMP- and PKG-dependent pathways to regulate lipid metabolism and energy homeostasis. This includes up-regulating lipid metabolism and mitochondrial oxygen utilization by activating the AMP-activated protein kinase (AMPK), and increasing energy expenditure by acting via MAPK11 to promote the UCP1-dependent thermogenesis of brown adipose tissue. Binds the clearance receptor NPR3 which removes the hormone from circulation. Functionally, may have a role in cardio-renal homeostasis through regulation of natriuresis, diuresis, vasodilation, and inhibiting aldosterone synthesis. In vitro, promotes the production of cGMP and induces vasodilation. May promote natriuresis, at least in part, by enhancing prostaglandin E2 synthesis resulting in the inhibition of renal Na+-K+-ATPase. However reports on the involvement of this peptide in mammal blood volume and blood pressure homeostasis are conflicting; according to a report, in vivo it is not sufficient to activate cGMP and does not inhibit collecting duct transport nor effect diuresis and natriuresis. Appears to bind to specific receptors that are distinct from the receptors bound by atrial natriuretic peptide and vessel dilator. Possibly enhances protein excretion in urine by decreasing proximal tubular protein reabsorption. May have a role in cardio-renal homeostasis through regulation of natriuresis, diuresis, and vasodilation. In vitro, promotes the production of cGMP and induces vasodilation. May promote natriuresis, at least in part, by enhancing prostaglandin E2 synthesis resulting in the inhibition of renal Na+-K+-ATPase. However reports on the involvement of this peptide in mammal blood volume and blood pressure homeostasis are conflicting; according to a report it is not sufficient to activate cGMP and does not inhibit collecting duct transport nor effect diuresis and natriuresis. Appears to bind to specific receptors that are distinct from the receptors bound by the atrial natriuretic and long-acting natriuretic peptides. Possibly functions in protein excretion in urine by maintaining the integrity of the proximal tubules and enhancing protein excretion by decreasing proximal tubular protein reabsorption. Its function is as follows. May have a role in cardio-renal homeostasis through regulation of diuresis and inhibiting aldosterone synthesis. In vitro, promotes the production of cGMP and induces vasodilation. May promote natriuresis, at least in part, by enhancing prostaglandin E2 synthesis resulting in the inhibition of renal Na+-K+-ATPase. May have a role in potassium excretion but not sodium excretion (natriuresis). Possibly enhances protein excretion in urine by decreasing proximal tubular protein reabsorption. In terms of biological role, hormone produced in the kidneys that appears to be important for maintaining cardio-renal homeostasis. Mediates vasodilation, natriuresis and diuresis primarily in the renal system, in order to maintain the extracellular fluid volume and control the fluid-electrolyte balance. Specifically binds and stimulates cGMP production by renal transmembrane receptors, likely NPR1. Urodilatin not ANP, may be the natriuretic peptide responsible for the regulation of sodium and water homeostasis in the kidney. Functionally, may have a role in cardio-renal homeostasis through regulation of natriuresis and vasodilation. In vivo promotes natriuresis and in vitro, vasodilates renal artery strips. May have a role in cardio-renal homeostasis through regulation of regulation of natriuresis and vasodilation. In vivo promotes natriuresis. In vitro, vasodilates intestinal smooth muscle but not smooth muscle strips. Its function is as follows. May have a role in cardio-renal homeostasis through regulation of natriuresis and vasodilation. In vivo promotes natriuresis. In vitro, selectively vasodilates intestinal and vascular smooth muscle strips. In terms of biological role, may have a role in cardio-renal homeostasis through regulation of natriuresis and vasodilation. In vivo promotes natriuresis. In vitro, selectively vasodilates intestinal smooth muscle but not vascular smooth muscle strips. This chain is Natriuretic peptides A (NPPA), found in Oryctolagus cuniculus (Rabbit).